A 435-amino-acid chain; its full sequence is Zinc metalloproteinase/disintegrin (435 aa).

A propeptide spanning residues 1–26 is cleaved from the precursor; the sequence is KMCGVTQNWESYESTKKASQLNLTPE. Gln-27 carries the pyrrolidone carboxylic acid modification. The 195-residue stretch at 33–227 folds into the Peptidase M12B domain; it reads RYIKLGIFVD…HNFQCILNAP (195 aa). A glycan (N-linked (GlcNAc...) asparagine) is linked at Asn-115. 3 disulfides stabilise this stretch: Cys-144–Cys-222, Cys-184–Cys-206, and Cys-186–Cys-189. Position 169 (His-169) interacts with Zn(2+). Glu-170 is an active-site residue. Zn(2+) is bound by residues His-173 and His-179. Positions 228–243 are excised as a propeptide; that stretch reads LRTDTVSTPVSGNELL. The Disintegrin domain maps to 235–318; the sequence is TPVSGNELLE…DCPTDDFHRN (84 aa). The Ca(2+) site is built by Val-237, Asn-240, Leu-242, Glu-244, Glu-247, and Asp-250. 6 cysteine pairs are disulfide-bonded: Cys-249–Cys-264, Cys-251–Cys-259, Cys-258–Cys-281, Cys-272–Cys-278, Cys-277–Cys-303, and Cys-290–Cys-310. The D/ECD-tripeptide signature appears at 296 to 298; it reads ECD.

The protein belongs to the venom metalloproteinase (M12B) family. P-III subfamily. P-IIIb sub-subfamily. As to quaternary structure, monomer. Zn(2+) is required as a cofactor. Post-translationally, the N-terminus of the metalloproteinase is blocked. In terms of tissue distribution, expressed by the venom gland.

The protein localises to the secreted. Its activity is regulated as follows. Inhibited by EDTA. Its function is as follows. Cleaves the alpha chain of fibrinogen (FGA) preferentially and cleaves the beta chain (FGB) either on longer incubation or at high concentrations. Induces apoptosis of endothelial cells (prior to cell detachment). In terms of biological role, disintegrin: inhibits platelet aggregation induced by ADP, thrombin, platelet-activating factor and collagen. Acts by inhibiting fibrinogen interaction with platelet receptors GPIIb/GPIIIa (ITGA2B/ITGB3). The protein is Zinc metalloproteinase/disintegrin of Craspedocephalus gramineus (Bamboo pit viper).